Consider the following 169-residue polypeptide: uncharacterized protein (169 aa).

The Nudix hydrolase domain occupies 35-163 (LIGRGTFILL…PYCPDSLQAL (129 aa)). The Nudix box signature appears at 81-103 (YADSAARELEEELGIRDAVLREH). Mg(2+)-binding residues include Glu-88 and Glu-92.

It belongs to the Nudix hydrolase family. Mg(2+) is required as a cofactor.

This is an uncharacterized protein from Pseudomonas aeruginosa (strain ATCC 15692 / DSM 22644 / CIP 104116 / JCM 14847 / LMG 12228 / 1C / PRS 101 / PAO1).